The primary structure comprises 334 residues: Aspartate carbamoyltransferase catalytic subunit (334 aa).

The carbamoyl phosphate site is built by Arg70 and Thr71. Lys98 provides a ligand contact to L-aspartate. Residues Arg120, His150, and Gln153 each contribute to the carbamoyl phosphate site. Arg183 and Arg239 together coordinate L-aspartate. Carbamoyl phosphate contacts are provided by Gly280 and Pro281.

Belongs to the aspartate/ornithine carbamoyltransferase superfamily. ATCase family. As to quaternary structure, heterododecamer (2C3:3R2) of six catalytic PyrB chains organized as two trimers (C3), and six regulatory PyrI chains organized as three dimers (R2).

It catalyses the reaction carbamoyl phosphate + L-aspartate = N-carbamoyl-L-aspartate + phosphate + H(+). Its pathway is pyrimidine metabolism; UMP biosynthesis via de novo pathway; (S)-dihydroorotate from bicarbonate: step 2/3. Functionally, catalyzes the condensation of carbamoyl phosphate and aspartate to form carbamoyl aspartate and inorganic phosphate, the committed step in the de novo pyrimidine nucleotide biosynthesis pathway. This is Aspartate carbamoyltransferase catalytic subunit from Pseudomonas aeruginosa (strain LESB58).